Consider the following 341-residue polypeptide: Thromboxane A2 receptor (341 aa).

Residues 1–29 (MWPNGTSLGACFRPVNITLQERRAIASPW) lie on the Extracellular side of the membrane. 2 N-linked (GlcNAc...) asparagine glycosylation sites follow: Asn4 and Asn16. A helical membrane pass occupies residues 30-52 (FAASFCALGLGSNLLALSVLAGA). The Cytoplasmic segment spans residues 53–65 (RPGAGPRSSFLAL). A helical transmembrane segment spans residues 66–86 (LCGLVLTDFLGLLVTGAIVAS). At 87–105 (QHAALLDWRATDPSCRLCY) the chain is on the extracellular side. A disulfide bridge connects residues Cys104 and Cys181. A helical membrane pass occupies residues 106-127 (FMGVAMVFFGLCPLLLGAAMAS). At 128–147 (ERFVGITRPFSRPTATSRRA) the chain is on the cytoplasmic side. Residues 148-170 (WATVGLVWVAAGALGLLPLLGLG) traverse the membrane as a helical segment. Over 171 to 191 (RYSVQYPGSWCFLTLGTQRGD) the chain is Extracellular. Residues 192 to 217 (VVFGLIFALLGSASVGLSLLLNTVSV) traverse the membrane as a helical segment. The Cytoplasmic portion of the chain corresponds to 218–244 (ATLCRVYHTREATQRPRDCEVEMMVQL). Residues 245-268 (VGIMVVATVCWMPLLVFIMQTLLQ) traverse the membrane as a helical segment. The Extracellular segment spans residues 269–287 (TPPVMSFSGQLLRATEHQL). The chain crosses the membrane as a helical span at residues 288–309 (LIYLRVATWNQILDPWVYILFR). The Cytoplasmic portion of the chain corresponds to 310-341 (RSVLRRLHPRFSSQLQAVSLRRPPAQAMLSGP). At Ser328 the chain carries Phosphoserine.

Belongs to the G-protein coupled receptor 1 family. Interacts with RPGRIP1L. Interacts with RACK1; the interaction regulates TBXA2R cell surface expression.

It localises to the cell membrane. Functionally, receptor for thromboxane A2 (TXA2), a potent stimulator of platelet aggregation. The activity of this receptor is mediated by a G-protein that activates a phosphatidylinositol-calcium second messenger system. In the kidney, the binding of TXA2 to glomerular TP receptors causes intense vasoconstriction. Activates phospholipase C and adenylyl cyclase. The polypeptide is Thromboxane A2 receptor (Tbxa2r) (Mus musculus (Mouse)).